Consider the following 145-residue polypeptide: MESYYLWFKSAHLISAICWMAGLLYLPRIYVYHTKAKIGSELDSTLQVMELKLLRFIMNPAMISTFIFGLINAHIYGFVALDTWFQFKMFAVLILVIFHGLLARWRKDFAKGKNVHSKKFYRIVNEIPAICMVIAVIMVIVKPFD.

4 helical membrane-spanning segments follow: residues L6 to L26, A61 to L81, T83 to A103, and I123 to P143. H12 is a binding site for heme. Position 88 (K88) interacts with heme.

Belongs to the HemJ family. In terms of assembly, homodimer. Heme b serves as cofactor.

It localises to the cell membrane. The catalysed reaction is protoporphyrinogen IX + 3 A = protoporphyrin IX + 3 AH2. Its pathway is porphyrin-containing compound metabolism; protoporphyrin-IX biosynthesis; protoporphyrin-IX from protoporphyrinogen-IX: step 1/1. Catalyzes the oxidation of protoporphyrinogen IX to protoporphyrin IX. Is involved in the biosynthesis of tetrapyrrole molecules like heme. Does not use oxygen or artificial electron acceptors such as menadione or benzoquinone. In Rickettsia prowazekii (strain Madrid E), this protein is Protoporphyrinogen IX oxidase.